A 257-amino-acid chain; its full sequence is NAD-capped RNA hydrolase NudC (257 aa).

Residues lysine 25 and arginine 69 each coordinate substrate. Zn(2+)-binding residues include cysteine 98 and cysteine 101. Residue glutamate 111 coordinates substrate. Residues cysteine 116 and cysteine 119 each contribute to the Zn(2+) site. Tyrosine 124 is a binding site for substrate. In terms of domain architecture, Nudix hydrolase spans 125–248 (PQIAPCIIVA…TVARRLIEDT (124 aa)). The a divalent metal cation site is built by alanine 158, glutamate 174, and glutamate 178. Positions 159–180 (GFVEVGETLEQAVAREVMEESG) match the Nudix box motif. Residue 192 to 199 (QPWPFPQS) coordinates substrate. A divalent metal cation is bound at residue glutamate 219. Substrate is bound at residue alanine 241.

It belongs to the Nudix hydrolase family. NudC subfamily. As to quaternary structure, homodimer. Requires Mg(2+) as cofactor. The cofactor is Mn(2+). Zn(2+) is required as a cofactor.

The enzyme catalyses a 5'-end NAD(+)-phospho-ribonucleoside in mRNA + H2O = a 5'-end phospho-adenosine-phospho-ribonucleoside in mRNA + beta-nicotinamide D-ribonucleotide + 2 H(+). It catalyses the reaction NAD(+) + H2O = beta-nicotinamide D-ribonucleotide + AMP + 2 H(+). It carries out the reaction NADH + H2O = reduced beta-nicotinamide D-ribonucleotide + AMP + 2 H(+). Functionally, mRNA decapping enzyme that specifically removes the nicotinamide adenine dinucleotide (NAD) cap from a subset of mRNAs by hydrolyzing the diphosphate linkage to produce nicotinamide mononucleotide (NMN) and 5' monophosphate mRNA. The NAD-cap is present at the 5'-end of some mRNAs and stabilizes RNA against 5'-processing. Has preference for mRNAs with a 5'-end purine. Catalyzes the hydrolysis of a broad range of dinucleotide pyrophosphates. The protein is NAD-capped RNA hydrolase NudC of Shigella dysenteriae serotype 1 (strain Sd197).